The chain runs to 289 residues: Phospholipase A1 (289 aa).

A signal peptide spans 1-20 (MRTGPGWLLAAAALPFFACA). The Periplasmic segment spans residues 21 to 52 (QEATIDKVHDTPAVRGSIIANMLQEHDNPFTL). The chain crosses the membrane as a beta stranded span at residues 53 to 65 (YPYESNYLLYTYT). Over 66 to 84 (SDLNKKAIESYNWSDNANK) the chain is Extracellular. Residues 85 to 99 (DEVKFQLSLAFPLWR) traverse the membrane as a beta stranded segment. Residues 100–105 (GILGDN) are Periplasmic-facing. Residues 106–118 (SLLGASYTQRSWW) traverse the membrane as a beta stranded segment. The Extracellular portion of the chain corresponds to 119 to 128 (QLSNTGESAP). S126 serves as a coordination point for Ca(2+). The beta stranded transmembrane segment at 129 to 148 (FRETNYEPQLFLGFATDYSV) threads the bilayer. Topologically, residues 149-150 (GD) are periplasmic. The chain crosses the membrane as a beta stranded span at residues 151 to 164 (WTLRDAEFGYNHQS). H162 acts as the Proton acceptor in catalysis. S164 (nucleophile) is an active-site residue. Topologically, residues 165-173 (NGRSDPTSR) are extracellular. 2 residues coordinate Ca(2+): R167 and S172. Residues 174–186 (SWNRLYSRLMAQN) form a beta stranded membrane-spanning segment. The Periplasmic segment spans residues 187-188 (GN). The chain crosses the membrane as a beta stranded span at residues 189–198 (WLVEVKPWYV). Residues 199–216 (IGDTSDNKNITKYMGYYQ) lie on the Extracellular side of the membrane. Residue D204 coordinates Ca(2+). Residues 217–223 (LKIGYQL) traverse the membrane as a beta stranded segment. At 224-225 (GE) the chain is on the periplasmic side. The beta stranded transmembrane segment at 226–234 (AVLSAKGQY) threads the bilayer. The Extracellular segment spans residues 235-241 (NWNTGYG). The beta stranded transmembrane segment at 242 to 250 (GAELGVSYP) threads the bilayer. Topologically, residues 251–255 (ITKHV) are periplasmic. Residues 256 to 265 (RFYTQVYSGY) traverse the membrane as a beta stranded segment. Residues 266-274 (GESLIDYDF) are Extracellular-facing. A beta stranded transmembrane segment spans residues 275–286 (NQTRVGMGVMLN). The Periplasmic portion of the chain corresponds to 287 to 289 (DLF).

The protein belongs to the phospholipase A1 family. In terms of assembly, homodimer; dimerization is reversible, and the dimeric form is the active one. Ca(2+) is required as a cofactor.

It is found in the cell outer membrane. The catalysed reaction is a 1,2-diacyl-sn-glycero-3-phosphocholine + H2O = a 2-acyl-sn-glycero-3-phosphocholine + a fatty acid + H(+). It catalyses the reaction a 1,2-diacyl-sn-glycero-3-phosphocholine + H2O = a 1-acyl-sn-glycero-3-phosphocholine + a fatty acid + H(+). In terms of biological role, hydrolysis of phosphatidylcholine with phospholipase A2 (EC 3.1.1.4) and phospholipase A1 (EC 3.1.1.32) activities. The protein is Phospholipase A1 (pldA) of Proteus vulgaris.